Here is a 130-residue protein sequence, read N- to C-terminus: Arsenical-resistance protein 2 (130 aa).

The 108-residue stretch at 17–124 (QRKDFQVVDL…WETHCRESNL (108 aa)) folds into the Rhodanese domain.

Functionally, involved in resistance to arsenic compounds. This is Arsenical-resistance protein 2 (ARR2) from Saccharomyces cerevisiae (strain ATCC 204508 / S288c) (Baker's yeast).